A 967-amino-acid polypeptide reads, in one-letter code: Leucine--tRNA ligase (967 aa).

The short motif at 43-53 (PYLSGHLHVGH) is the 'HIGH' region element. Positions 650–654 (KMSKS) match the 'KMSKS' region motif. Lys-653 contacts ATP.

The protein belongs to the class-I aminoacyl-tRNA synthetase family.

It localises to the cytoplasm. It catalyses the reaction tRNA(Leu) + L-leucine + ATP = L-leucyl-tRNA(Leu) + AMP + diphosphate. This is Leucine--tRNA ligase from Pyrococcus abyssi (strain GE5 / Orsay).